Consider the following 182-residue polypeptide: Bifunctional protein PyrR (182 aa).

A PRPP-binding motif is present at residues 99-111 (VVLVDDVLFTGRT).

Belongs to the purine/pyrimidine phosphoribosyltransferase family. PyrR subfamily.

It carries out the reaction UMP + diphosphate = 5-phospho-alpha-D-ribose 1-diphosphate + uracil. Functionally, regulates the transcription of the pyrimidine nucleotide (pyr) operon in response to exogenous pyrimidines. Its function is as follows. Also displays a weak uracil phosphoribosyltransferase activity which is not physiologically significant. This is Bifunctional protein PyrR from Chloroflexus aurantiacus (strain ATCC 29366 / DSM 635 / J-10-fl).